The primary structure comprises 372 residues: MIFDEDSNSVTQDSGYMTVGNAYSNAVGYISMSDHWSKLTKPSSIKVESNGASPNKADLIVEPLESGFALTLGNALRRVMMSSLRGFAVYGVEIENVLHEFTSISGVREDVTDILLNISMMRVKLSGLSNKVLSLRVKGPCEVRSGMIPDTDDCIILNKDLLICTLDQDVDFNIKMYVNSGKGYVPAVKRKSVSKLSDVPVNFIATNALYSPIKKASFKVESSRIGQFTDYDRLVLSVETDGSILPDEAVALAARILQDQFQPFINFDETDEPHKKIDTKDALPYDSNLLRKVDELELSVRSYNCLKNDNITYIGDLVQKTESDMLRTPNFGRKSLNEINELLASMNLHLGMKIANWPPESIESLSKQYSEE.

The tract at residues methionine 1–aspartate 268 is alpha N-terminal domain (alpha-NTD). Residues lysine 280–glutamate 372 are alpha C-terminal domain (alpha-CTD).

This sequence belongs to the RNA polymerase alpha chain family. In terms of assembly, homodimer. The RNAP catalytic core consists of 2 alpha, 1 beta, 1 beta' and 1 omega subunit. When a sigma factor is associated with the core the holoenzyme is formed, which can initiate transcription.

The catalysed reaction is RNA(n) + a ribonucleoside 5'-triphosphate = RNA(n+1) + diphosphate. Functionally, DNA-dependent RNA polymerase catalyzes the transcription of DNA into RNA using the four ribonucleoside triphosphates as substrates. The sequence is that of DNA-directed RNA polymerase subunit alpha from Ehrlichia canis (strain Jake).